Consider the following 431-residue polypeptide: Histidinol dehydrogenase (431 aa).

NAD(+) contacts are provided by Tyr-129, Gln-191, and Asn-214. Substrate contacts are provided by Ser-237, Gln-259, and His-262. Zn(2+)-binding residues include Gln-259 and His-262. Residues Glu-327 and His-328 each act as proton acceptor in the active site. Substrate contacts are provided by His-328, Asp-361, Glu-415, and His-420. Position 361 (Asp-361) interacts with Zn(2+). His-420 provides a ligand contact to Zn(2+).

This sequence belongs to the histidinol dehydrogenase family. Requires Zn(2+) as cofactor.

The catalysed reaction is L-histidinol + 2 NAD(+) + H2O = L-histidine + 2 NADH + 3 H(+). It functions in the pathway amino-acid biosynthesis; L-histidine biosynthesis; L-histidine from 5-phospho-alpha-D-ribose 1-diphosphate: step 9/9. Catalyzes the sequential NAD-dependent oxidations of L-histidinol to L-histidinaldehyde and then to L-histidine. The sequence is that of Histidinol dehydrogenase (hisD) from Lactococcus lactis subsp. lactis (strain IL1403) (Streptococcus lactis).